A 254-amino-acid chain; its full sequence is 3-dehydroquinate dehydratase (254 aa).

3-dehydroquinate is bound by residues 47 to 49 (EFR) and Arg-83. The Proton donor/acceptor role is filled by His-144. Residue Lys-171 is the Schiff-base intermediate with substrate of the active site. 3 residues coordinate 3-dehydroquinate: Arg-213, Ser-232, and Gln-236.

This sequence belongs to the type-I 3-dehydroquinase family. As to quaternary structure, homodimer.

The catalysed reaction is 3-dehydroquinate = 3-dehydroshikimate + H2O. It participates in metabolic intermediate biosynthesis; chorismate biosynthesis; chorismate from D-erythrose 4-phosphate and phosphoenolpyruvate: step 3/7. In terms of biological role, involved in the third step of the chorismate pathway, which leads to the biosynthesis of aromatic amino acids. Catalyzes the cis-dehydration of 3-dehydroquinate (DHQ) and introduces the first double bond of the aromatic ring to yield 3-dehydroshikimate. This is 3-dehydroquinate dehydratase from Neisseria gonorrhoeae (strain ATCC 700825 / FA 1090).